Reading from the N-terminus, the 416-residue chain is Coenzyme F420H(2) oxidase (416 aa).

7 residues coordinate Fe cation: His-87, Glu-89, Asp-91, His-92, His-155, Asp-174, and His-239. In terms of domain architecture, Flavodoxin-like spans 266-407 (AVIVYDTMHY…NCYNMGKELA (142 aa)). Residues 272 to 277 (TMHYST), 324 to 327 (TIYD), and 359 to 364 (SMGGEG) contribute to the FMN site.

This sequence in the N-terminal section; belongs to the zinc metallo-hydrolase group 3 family. The cofactor is FMN. Fe cation serves as cofactor.

It catalyses the reaction 2 reduced coenzyme F420-(gamma-L-Glu)(n) + O2 = 2 oxidized coenzyme F420-(gamma-L-Glu)(n) + 2 H2O + 2 H(+). Catalyzes the oxidation of F420H(2) with O(2). May be involved in O(2) detoxification, reducing the intracellular O(2) concentration to a level allowing growth at the expense of methane formation. In Methanocaldococcus jannaschii (strain ATCC 43067 / DSM 2661 / JAL-1 / JCM 10045 / NBRC 100440) (Methanococcus jannaschii), this protein is Coenzyme F420H(2) oxidase (fprA).